The sequence spans 205 residues: Disintegrin-like leberagin-C (205 aa).

The 87-residue stretch at 4 to 90 (PPVCGNELLE…DCPIDRFHRN (87 aa)) folds into the Disintegrin domain. Cystine bridges form between C7-C26, C18-C36, C62-C82, C69-C94, C101-C106, C113-C128, C151-C158, C163-C171, and C193-C198. A D/ECD-tripeptide motif is present at residues 68–70 (ECD). N120 carries N-linked (GlcNAc...) asparagine glycosylation.

This sequence belongs to the venom metalloproteinase (M12B) family. P-III subfamily. P-IIIb sub-subfamily. Monomer. As to expression, expressed by the venom gland.

Its subcellular location is the secreted. Its function is as follows. Inhibits platelet aggregation induced by thrombin and arachidonic acid with IC(50) of 40 and 50 nM respectively (in rabbit platetelet-rich plasma). It also inhibits the adhesion of melanoma tumor cells on fibrinogen and fibronectin, by interfering with the function of alpha-V/beta-3 (ITGAV/ITGB3) and, to a lesser extent, with alpha-V/beta-6 (ITGAV/ITGB6) and alpha-5/beta-1 (ITGA5/ITGB1) integrins. This Macrovipera lebetina transmediterranea (Blunt-nosed viper) protein is Disintegrin-like leberagin-C.